The following is a 278-amino-acid chain: Pantothenate synthetase (278 aa).

Met27–His34 serves as a coordination point for ATP. His34 acts as the Proton donor in catalysis. Gln58 serves as a coordination point for (R)-pantoate. Gln58 provides a ligand contact to beta-alanine. Residue Gly144 to Asp147 coordinates ATP. Residue Gln150 coordinates (R)-pantoate. ATP is bound by residues Val173 and Met181 to Arg184.

The protein belongs to the pantothenate synthetase family. In terms of assembly, homodimer.

The protein resides in the cytoplasm. It carries out the reaction (R)-pantoate + beta-alanine + ATP = (R)-pantothenate + AMP + diphosphate + H(+). Its pathway is cofactor biosynthesis; (R)-pantothenate biosynthesis; (R)-pantothenate from (R)-pantoate and beta-alanine: step 1/1. In terms of biological role, catalyzes the condensation of pantoate with beta-alanine in an ATP-dependent reaction via a pantoyl-adenylate intermediate. The sequence is that of Pantothenate synthetase from Roseiflexus castenholzii (strain DSM 13941 / HLO8).